The sequence spans 377 residues: Chaperone protein DnaJ (377 aa).

In terms of domain architecture, J spans 5 to 70 (DYYQILGIPK…EKRSAYDQYG (66 aa)). The CR-type zinc-finger motif lies at 132 to 210 (GIKKEIQIPT…CHGQGRVETY (79 aa)). Zn(2+)-binding residues include Cys145, Cys148, Cys162, Cys165, Cys184, Cys187, Cys198, and Cys201. CXXCXGXG motif repeat units lie at residues 145-152 (CKTCYGSG), 162-169 (CSTCHGKG), 184-191 (CPTCHGKG), and 198-205 (CNLCHGQG).

Belongs to the DnaJ family. As to quaternary structure, homodimer. Zn(2+) is required as a cofactor.

The protein resides in the cytoplasm. Its function is as follows. Participates actively in the response to hyperosmotic and heat shock by preventing the aggregation of stress-denatured proteins and by disaggregating proteins, also in an autonomous, DnaK-independent fashion. Unfolded proteins bind initially to DnaJ; upon interaction with the DnaJ-bound protein, DnaK hydrolyzes its bound ATP, resulting in the formation of a stable complex. GrpE releases ADP from DnaK; ATP binding to DnaK triggers the release of the substrate protein, thus completing the reaction cycle. Several rounds of ATP-dependent interactions between DnaJ, DnaK and GrpE are required for fully efficient folding. Also involved, together with DnaK and GrpE, in the DNA replication of plasmids through activation of initiation proteins. This Buchnera aphidicola subsp. Acyrthosiphon pisum (strain Tuc7) protein is Chaperone protein DnaJ.